A 300-amino-acid polypeptide reads, in one-letter code: tRNA dimethylallyltransferase (300 aa).

11–18 (GPTAVGKS) contacts ATP. 13–18 (TAVGKS) lines the substrate pocket. The tract at residues 35 to 38 (DSIQ) is interaction with substrate tRNA.

It belongs to the IPP transferase family. As to quaternary structure, monomer. Mg(2+) serves as cofactor.

The enzyme catalyses adenosine(37) in tRNA + dimethylallyl diphosphate = N(6)-dimethylallyladenosine(37) in tRNA + diphosphate. Catalyzes the transfer of a dimethylallyl group onto the adenine at position 37 in tRNAs that read codons beginning with uridine, leading to the formation of N6-(dimethylallyl)adenosine (i(6)A). The chain is tRNA dimethylallyltransferase from Borreliella afzelii (strain PKo) (Borrelia afzelii).